Reading from the N-terminus, the 56-residue chain is Ovomucoid (56 aa).

A Kazal-like domain is found at 6–56; that stretch reads VDCSEYPKPDCTTEERPLCGSDNKTYGNKCNFCNAVVESNGTLTLSHFGKC. Cystine bridges form between Cys-8–Cys-38, Cys-16–Cys-35, and Cys-24–Cys-56. An N-linked (GlcNAc...) asparagine glycan is attached at Asn-45.

It is found in the secreted. The chain is Ovomucoid from Francolinus pondicerianus (Grey francolin).